The sequence spans 120 residues: SKA complex subunit 2 (120 aa).

This sequence belongs to the SKA2 family. Component of the SKA complex, composed of SKA1, SKA2 and SKA3. The SKA complex is a homodimer organized around a central W-shaped coiled-coil structure, formed by the interacting domains of SKA1, SKA2, and SKA3, each end of the 'W' is extended further by the C-terminal microtubule-binding domains of SKA1 and SKA3; the complex forms extended structures on microtubules. May interact with NR3C1; the relevance of such interaction remains unclear in vivo. Interacts with the MIS12 complex subunit DSN1. Interacts with the NDC80 complex; the interaction is required to establish kinetochore-microtubule end-on attachments.

The protein resides in the cytoplasm. It localises to the cytoskeleton. The protein localises to the spindle. It is found in the chromosome. Its subcellular location is the centromere. The protein resides in the kinetochore. It localises to the microtubule organizing center. The protein localises to the centrosome. Functionally, component of the SKA complex, a microtubule plus end-binding complex of the outer kinetochore that stabilizes spindle microtubule-kinetochore attachments, promotes alignment of chromosomes at the mitotic spindle equator (chromosome congression) and assists suppression of the spindle assembly checkpoint. Kinetochores, consisting of a centromere-associated inner segment and a microtubule-contacting outer segment, play a crucial role in chromosome segregation by mediating the physical connection between centromeric DNA and spindle microtubules. The outer kinetochore is made up of the ten-subunit KMN network complex, comprising the MIS12, NDC80 and KNL1 complexes, and auxiliary microtubule-associated components such as the SKA complex; together they connect the outer kinetochore with the inner kinetochore, bind microtubules, and mediate interactions with mitotic checkpoint proteins that delay anaphase until chromosomes are bioriented on the spindle. The SKA complex is loaded onto bioriented kinetochores and it facilitates chromosome congression by stabilizing microtubules together with MAPRE1, and end-on attachment of the NDC80 complex to depolymerizing spindle microtubules, thereby assisting the poleward-moving kinetochore in withstanding microtubule pulling forces. The complex associates with dynamic microtubule plus-ends and can track both depolymerizing and elongating microtubules. The complex recruits protein phosphatase 1 (PP1) to the kinetochore in prometaphase and metaphase, to oppose spindle assembly checkpoint signaling and promote the onset of anaphase. Binds directly to microtubules; but with a much lower affinity than SKA1. During meiosis the SKA complex stabilizes the meiotic spindle and is required for its migration to the cortex. This chain is SKA complex subunit 2 (Ska2), found in Mus musculus (Mouse).